A 507-amino-acid polypeptide reads, in one-letter code: MANSSVYADVIVVGAGPVGLFVACELALHDVSVIVLERDADSDNVWKKGLLGGRGMYKPALEAFYRRGLLADLLYDEKRVTYLEKTSGFQYAGHFGGRLLNANAVDFSRFKYHLPGPTFLPAKTTIADIECELSKRATECGVRIVRGVEISRVEDEGDEVTVWADNQSFKSNWLVACDGGKSTIRKAAGFQFTGTDSELTCYIAVCDVDKPELLGKGMKPTDAGMYIVSGPRHLYVMDFDTTFDRSQTVTKEHLERVLQRVSGTSVKIEALELVSTFTDRCKQTTQYRKGRILLAGDSAHIHSPLGAQGLTTGIADAFNLGWKLASTVKGYASADLLDTYQRERQPEGAWTLDWSRSQVVIMRPDPAGKAISRLVTEYMATDDGTTFFVNKIWGISRRYDLVGAQAHPLVGCSVPDFQFEDGSYLGSKLHEGKFMTVDFSGSKLLEEATDLVQPWVGYLSCSVKDRLGMNALLLRPDGVVAWVAEDEVKVDSWKAALSQWIVLPGEA.

The protein belongs to the PheA/TfdB FAD monooxygenase family. FAD serves as cofactor.

Its pathway is pigment biosynthesis. In terms of biological role, monoogygenase; part of the ergochrome gene cluster responsible for the typical purple-black color of the ergot sclerotia. The ergochrome gene cluster produces several ergot pigments including the yellow ergochrome secalonic acid and its derivatives, as well as the red anthraquinones endocrocin and clavorubin. The pathway begins with the synthesis of atrochrysone thioester by the polyketide synthase (PKS) CPUR_05437. The atrochrysone carboxyl ACP thioesterase CPUR_05436 then breaks the thioester bond and releases the atrochrysone carboxylic acid from CPUR_05437. The atrochrysone carboxylic acid is then converted to atrochrysone which is further transformed into emodin anthrone. The next step is performed by the anthrone oxygenase CPUR_05434 that catalyzes the oxidation of emodinanthrone to emodin. Emodin is further modified to yield monodictyphenone via several steps involving CPUR_05427, CPUR_05428, CPUR_05429 and CPUR_05430. The short chain dehydrogenase/reductase CPUR_05418 then catalyzes the C-5 ketoreduction to give the xanthone skeleton of the monomeric units. Ergochromes formation requires further dimerization steps of different xanthone units, probably catalyzed by the cytochrome P450 monooxygenase CPUR_05419. CPUR_05425, CPUR_05426 and CPUR_05431 are unique to Claviceps, thus it is likely that they are involved in further modification of xanthone units or in their dimerization. The yellow ergochromes and the red anthraquinone pigments endocrocin and clavorubin are products from the same PKS derived precursors and the latter are likely shunt products in the pathway of xanthone biosynthesis. It is proposed that atrochrysone carboxylic acid released from the PKS CPUR_05437 can also be converted to endocrocin anthrone which is further oxidized into endocrocin by CPUR_05435. Endocrocin could be then modified to clavorubin, possibly by CPUR_05423 and CPUR_05431. Clavorubin is the principal anthraquinone metabolite produced by the cluster with a much higher yield compared to endocrocin. The protein is Monoogygenase CPUR_05431 of Claviceps purpurea (strain 20.1) (Ergot fungus).